A 376-amino-acid polypeptide reads, in one-letter code: Coatomer subunit delta-4 (376 aa).

Residues 65–92 form a disordered region; it reads LNTDTDTFTSRPKGRTSGGTTGAGKGIG. Gly residues predominate over residues 80 to 92; the sequence is TSGGTTGAGKGIG. Residues 134–376 form the MHD domain; sequence SDPVTVAVEE…RLVADNYQVV (243 aa).

This sequence belongs to the adaptor complexes medium subunit family. Delta-COP subfamily. Oligomeric complex that consists of at least the alpha, beta, beta', gamma, delta, epsilon and zeta subunits.

It localises to the cytoplasm. Its subcellular location is the golgi apparatus membrane. The protein resides in the cytoplasmic vesicle. The protein localises to the COPI-coated vesicle membrane. Functionally, the coatomer is a cytosolic protein complex that binds to dilysine motifs and reversibly associates with Golgi non-clathrin-coated vesicles, which further mediate biosynthetic protein transport from the ER, via the Golgi up to the trans Golgi network. Coatomer complex is required for budding from Golgi membranes, and is essential for the retrograde Golgi-to-ER transport of dilysine-tagged proteins. This Oryza sativa subsp. japonica (Rice) protein is Coatomer subunit delta-4.